The sequence spans 607 residues: Glutamine--fructose-6-phosphate aminotransferase [isomerizing] (607 aa).

Catalysis depends on cysteine 2, which acts as the Nucleophile; for GATase activity. Residues 2–218 (CGIIGYSGSK…DGDVVLVTKD (217 aa)) enclose the Glutamine amidotransferase type-2 domain. 2 consecutive SIS domains span residues 280–424 (FDEQ…KLGK) and 457–597 (IAKK…VDKP). Lysine 602 acts as the For Fru-6P isomerization activity in catalysis.

As to quaternary structure, homodimer.

It localises to the cytoplasm. It carries out the reaction D-fructose 6-phosphate + L-glutamine = D-glucosamine 6-phosphate + L-glutamate. Functionally, catalyzes the first step in hexosamine metabolism, converting fructose-6P into glucosamine-6P using glutamine as a nitrogen source. The sequence is that of Glutamine--fructose-6-phosphate aminotransferase [isomerizing] from Fusobacterium nucleatum subsp. nucleatum (strain ATCC 25586 / DSM 15643 / BCRC 10681 / CIP 101130 / JCM 8532 / KCTC 2640 / LMG 13131 / VPI 4355).